Consider the following 81-residue polypeptide: Apolipoprotein C-I, acidic form (81 aa).

The N-terminal stretch at 1–24 (MRLFLSLLVVVLSIVLEGPTPAQG) is a signal peptide.

This sequence belongs to the apolipoprotein C1 family.

It localises to the secreted. The sequence is that of Apolipoprotein C-I, acidic form (APOC1A) from Cercocebus atys (Sooty mangabey).